The sequence spans 80 residues: Protein FAM229B (80 aa).

The tract at residues 1-45 (MPFRFGTQPRRFPVEGGDSSIELESGLSSSASCTGKETSPNRQLR) is disordered. The span at 15–32 (EGGDSSIELESGLSSSAS) shows a compositional bias: low complexity. Residues 33–42 (CTGKETSPNR) show a composition bias toward polar residues.

Belongs to the FAM229 family.

The polypeptide is Protein FAM229B (Fam229b) (Mus musculus (Mouse)).